The chain runs to 184 residues: MREYKIVVLGSGGVGKSALTVQFVQCIFVEKYDPTIEDSYRKQVEVDGQQCMLEILDTAGTEQFTAMRDLYMKNGQGFVLVYSITAQSTFNDLQDLREQILRVKDTDDVPMVLVGNKCDLEEERVVGKELGKNLATQFNCAFMETSAKAKVNVNDIFYDLVRQINKKSPEKKQKKPKKSLCVLL.

GTP is bound at residue 10–17; it reads GSGGVGKS. The Effector region motif lies at 32-40; the sequence is YDPTIEDSY. GTP-binding positions include 57–61 and 116–119; these read DTAGT and NKCD. Cys181 carries the post-translational modification Cysteine methyl ester. A lipid anchor (S-geranylgeranyl cysteine) is attached at Cys181. A propeptide spans 182 to 184 (removed in mature form); sequence VLL.

Belongs to the small GTPase superfamily. Ras family.

It is found in the cell membrane. The enzyme catalyses GTP + H2O = GDP + phosphate + H(+). Alternates between an inactive form bound to GDP and an active form bound to GTP. Activated by a guanine nucleotide-exchange factor (GEF) and inactivated by a GTPase-activating protein (GAP). Its function is as follows. Ras proteins bind GDP/GTP and possess intrinsic GTPase activity. Plays a role in photoreceptor cell determination. In Drosophila melanogaster (Fruit fly), this protein is Ras-related protein Rap1.